The chain runs to 88 residues: Large ribosomal subunit protein bL31B (88 aa).

The protein belongs to the bacterial ribosomal protein bL31 family. Type B subfamily. Part of the 50S ribosomal subunit.

The protein is Large ribosomal subunit protein bL31B of Corynebacterium glutamicum (strain R).